Reading from the N-terminus, the 1748-residue chain is RANBP2-like and GRIP domain-containing protein 1 (1748 aa).

At Thr-14 the chain carries Phosphothreonine. TPR repeat units lie at residues 51–84 (PRAHRFLGLLYELEENTEKAVECYRRSLELNPPQ), 575–608 (QKMGRGLNSSYDQQEYIGRSVHYWKKVLPLLKII), and 639–672 (EDAHITFAILDAVHGNIEDAVTAFESIKSVVSYW). The segment at 751–796 (GPLYKNGSLRNADSEIKHSTPSPTKYSLSPSKSYKYSPKTPPRWAE) is disordered. Low complexity predominate over residues 769 to 788 (STPSPTKYSLSPSKSYKYSP). One can recognise a RanBD1 1 domain in the interval 1021–1157 (HFEPVVQMPE…FEECQRLLLD (137 aa)). 2 disordered regions span residues 1198–1233 (TKVTEEENKGSGTGAAGASDTTIKPNPENTGPTLEW) and 1291–1316 (AKLNQSGTSVGTDEESDVTQEEERDG). Residues 1220–1229 (IKPNPENTGP) show a composition bias toward polar residues. Residues 1302–1314 (TDEESDVTQEEER) show a composition bias toward acidic residues. The RanBD1 2 domain occupies 1318 to 1454 (YFEPVVPLPD…FDEAKTAQEK (137 aa)). Positions 1565–1578 (NDSETSSVAQSGSE) are enriched in polar residues. The tract at residues 1565-1606 (NDSETSSVAQSGSESKVEPKKCELSKNSDIEQSSDSKVKNLS) is disordered. Positions 1579-1602 (SKVEPKKCELSKNSDIEQSSDSKV) are enriched in basic and acidic residues. One can recognise a GRIP domain in the interval 1685 to 1735 (QEESAANVEHLKNVLLQFIFLKPGSERESLLPVINTMLQLSPEEKGKLAAV).

The chain is RANBP2-like and GRIP domain-containing protein 1 (RGPD1) from Homo sapiens (Human).